Here is a 585-residue protein sequence, read N- to C-terminus: Formate--tetrahydrofolate ligase (585 aa).

65-72 (TPHGEGKT) is a binding site for ATP.

It belongs to the formate--tetrahydrofolate ligase family.

The enzyme catalyses (6S)-5,6,7,8-tetrahydrofolate + formate + ATP = (6R)-10-formyltetrahydrofolate + ADP + phosphate. It functions in the pathway one-carbon metabolism; tetrahydrofolate interconversion. In Shewanella baltica (strain OS155 / ATCC BAA-1091), this protein is Formate--tetrahydrofolate ligase.